Reading from the N-terminus, the 379-residue chain is Putative glutamate--cysteine ligase 2 (379 aa).

Belongs to the glutamate--cysteine ligase type 2 family. YbdK subfamily.

It carries out the reaction L-cysteine + L-glutamate + ATP = gamma-L-glutamyl-L-cysteine + ADP + phosphate + H(+). Its function is as follows. ATP-dependent carboxylate-amine ligase which exhibits weak glutamate--cysteine ligase activity. The polypeptide is Putative glutamate--cysteine ligase 2 (Mycobacterium avium (strain 104)).